The chain runs to 389 residues: MVTVEEVRKAQRAEGPATILAIGTATPANCILQSEYPDYYFRITNSEHKTELKEKFKRMCDKSMIRKRYMHLTEEILKENPNLCAYEAPSLDARQDMVVVEVPKLGKEAATKAIKEWGQPKSKITHVVFCTTSGVDMPGADYQLTKLLGLRPSVKRLMMYQQGCFAGGTVLRVAKDLAENNKGARVLVVCSEITAVTFRGPNDTHLDSLVGQALFGDGSAALIIGADPIPEIEKPTFELVSAAQTILPDSDGAIDGHLREVGLTFHLLKDVPGLISKNIEKSLVEAFKPLGISDWNSLFWIAHPGGPAILDQVESKLALKPEKLRATRHVLGEYGNMSSACVLFILDEMRRKCAEDGLKTTGEGLEWGVLFGFGPGLTVETVVLHSVGI.

Cys-164 is an active-site residue.

This sequence belongs to the thiolase-like superfamily. Chalcone/stilbene synthases family.

The protein resides in the cytoplasm. The catalysed reaction is (E)-4-coumaroyl-CoA + 3 malonyl-CoA + 3 H(+) = 2',4,4',6'-tetrahydroxychalcone + 3 CO2 + 4 CoA. It participates in secondary metabolite biosynthesis; flavonoid biosynthesis. In terms of biological role, involved in the biosynthesis of prenylated phenolics natural products which contribute to the bitter taste of beer and display broad biological activities. Chalcone synthase that can use 4-coumaroyl-CoA to produce 4,2',4',6'-tetrahydroxychalcone (also termed naringenin-chalcone or chalcone) which can, under specific conditions, spontaneously isomerize into naringenin. The sequence is that of Chalcone synthase H2 from Humulus lupulus (European hop).